The chain runs to 160 residues: pH-gated potassium channel KcsA (160 aa).

Residues 1-27 (MPPMLSGLLARLVKLLLGRHGSALHWR) are Cytoplasmic-facing. A helical membrane pass occupies residues 28–50 (AAGAATVLLVIVLLAGSYLAVLA). Over 51–61 (ERGAPGAQLIT) the chain is Extracellular. Residues 62–72 (YPRALWWSVET) constitute an intramembrane region (helical; Pore-forming). An intramembrane region (pore-forming) is located at residues 73 to 80 (ATTVGYGD). A Selectivity filter motif is present at residues 75 to 80 (TVGYGD). Residues 81-87 (LYPVTLW) lie on the Extracellular side of the membrane. The helical transmembrane segment at 88–111 (GRLVAVVVMVAGITSFGLVTAALA) threads the bilayer. Residues 112–160 (TWFVGREQERRGHFVRHSEKAAEEAYTRTTRALHERFDRLERMLDDNRR) lie on the Cytoplasmic side of the membrane.

This sequence belongs to the potassium channel family. In terms of assembly, homotetramer.

It is found in the cell membrane. Its function is as follows. Acts as a pH-gated potassium ion channel; changing the cytosolic pH from 7 to 4 opens the channel. The sequence is that of pH-gated potassium channel KcsA (kcsA) from Streptomyces coelicolor (strain ATCC BAA-471 / A3(2) / M145).